Consider the following 161-residue polypeptide: Nucleotide-binding protein RC1_3464 (161 aa).

It belongs to the YajQ family.

Its function is as follows. Nucleotide-binding protein. This is Nucleotide-binding protein RC1_3464 from Rhodospirillum centenum (strain ATCC 51521 / SW).